Consider the following 595-residue polypeptide: Chaperone protein HscA homolog (595 aa).

Belongs to the heat shock protein 70 family.

Functionally, chaperone involved in the maturation of iron-sulfur cluster-containing proteins. Has a low intrinsic ATPase activity which is markedly stimulated by HscB. The chain is Chaperone protein HscA homolog from Rickettsia africae (strain ESF-5).